We begin with the raw amino-acid sequence, 461 residues long: Lysosomal dipeptide transporter MFSD1 (461 aa).

Over residues 1-13 the composition is skewed to basic and acidic residues; sequence MADREEHQGLLDG. Positions 1–22 are disordered; sequence MADREEHQGLLDGDRDEDEGDK. Positions 10–11 match the Dileucine internalization motif motif; sequence LL. Helical transmembrane passes span 37 to 57, 81 to 101, 111 to 131, 134 to 154, 264 to 284, 302 to 322, 331 to 351, 359 to 379, 390 to 410, and 416 to 436; these read LLHR…SYFC, QLYA…GFLL, TVIF…GALA, FWLM…LAVA, LWLI…FIGL, AINS…GFLV, WVML…FTFW, LLGV…AFVV, FMQS…GSIL, and LFLE…VVLL.

It belongs to the major facilitator superfamily. As to quaternary structure, homodimer. Interacts with lysosomal protein GLMP (via lumenal domain); the interaction starts while both proteins are still in the endoplasmic reticulum and is required for stabilization of MFSD1 in lysosomes but has no direct effect on its targeting to lysosomes or transporter activity.

Its subcellular location is the lysosome membrane. It catalyses the reaction L-alpha-aminoacyl-L-arginine(out) = L-alpha-aminoacyl-L-arginine(in). The enzyme catalyses L-arginyl-L-alpha-amino acid(out) = L-arginyl-L-alpha-amino acid(in). The catalysed reaction is L-arginyl-glycine(out) = L-arginyl-glycine(in). It carries out the reaction L-alpha-aminoacyl-L-lysine(out) = L-alpha-aminoacyl-L-lysine(in). It catalyses the reaction L-aspartyl-L-lysine(out) = L-aspartyl-L-lysine(in). The enzyme catalyses L-alanyl-L-lysine(out) = L-alanyl-L-lysine(in). The catalysed reaction is L-lysyl-L-alpha-amino acid(out) = L-lysyl-L-alpha-amino acid(in). It carries out the reaction L-lysyl-L-alanine(out) = L-lysyl-L-alanine(in). It catalyses the reaction L-lysyl-L-lysine(out) = L-lysyl-L-lysine(in). The enzyme catalyses L-lysyl-glycine(out) = L-lysyl-glycine(in). The catalysed reaction is L-alpha-aminoacyl-L-histidine(out) = L-alpha-aminoacyl-L-histidine(in). It carries out the reaction L-histidyl-L-alpha-amino acid(out) = L-histidyl-L-alpha-amino acid(in). It catalyses the reaction L-histidyl-glycine(out) = L-histidyl-glycine(in). Lysosomal dipeptide uniporter that selectively exports lysine, arginine or histidine-containing dipeptides with a net positive charge from the lysosome lumen into the cytosol. Could play a role in a specific type of protein O-glycosylation indirectly regulating macrophages migration and tissue invasion. Also essential for liver homeostasis. The sequence is that of Lysosomal dipeptide transporter MFSD1 (mfsd1) from Danio rerio (Zebrafish).